The following is a 608-amino-acid chain: Isocitrate dehydrogenase kinase/phosphatase (608 aa).

ATP is bound by residues 328–334 and lysine 349; that span reads APGIKGL. The active site involves aspartate 384.

The protein belongs to the AceK family.

Its subcellular location is the cytoplasm. The catalysed reaction is L-seryl-[isocitrate dehydrogenase] + ATP = O-phospho-L-seryl-[isocitrate dehydrogenase] + ADP + H(+). In terms of biological role, bifunctional enzyme which can phosphorylate or dephosphorylate isocitrate dehydrogenase (IDH) on a specific serine residue. This is a regulatory mechanism which enables bacteria to bypass the Krebs cycle via the glyoxylate shunt in response to the source of carbon. When bacteria are grown on glucose, IDH is fully active and unphosphorylated, but when grown on acetate or ethanol, the activity of IDH declines drastically concomitant with its phosphorylation. This Cupriavidus pinatubonensis (strain JMP 134 / LMG 1197) (Cupriavidus necator (strain JMP 134)) protein is Isocitrate dehydrogenase kinase/phosphatase.